The following is a 666-amino-acid chain: Endogenous retrovirus group K member 6 Gag polyprotein (666 aa).

G2 is lipidated: N-myristoyl glycine. The disordered stretch occupies residues G165 to L264. The span at G232–P247 shows a compositional bias: pro residues. 2 consecutive CCHC-type zinc fingers follow at residues R544–V561 and D580–S597. A disordered region spans residues K598–S642. Polar residues predominate over residues Q604–G622. Residues F624–P640 show a composition bias toward low complexity.

It belongs to the beta type-B retroviral Gag protein family. HERV class-II K(HML-2) gag subfamily. Post-translationally, myristoylation is essential for retroviral assembly. Alteration of the glycine residue leads to a block in the budding of particles and an accumulation of Gag inside the cell. Specific enzymatic cleavages may yield mature proteins.

The protein localises to the cell membrane. Its function is as follows. The products of the Gag polyproteins of infectious retroviruses perform highly complex orchestrated tasks during the assembly, budding, maturation, and infection stages of the viral replication cycle. During viral assembly, the proteins form membrane associations and self-associations that ultimately result in budding of an immature virion from the infected cell. Gag precursors also function during viral assembly to selectively bind and package two plus strands of genomic RNA. Endogenous Gag proteins may have kept, lost or modified their original function during evolution. This is Endogenous retrovirus group K member 6 Gag polyprotein (ERVK-6) from Homo sapiens (Human).